The chain runs to 286 residues: Polyamine aminopropyltransferase (286 aa).

The region spanning 6–239 (PVWIDEVFED…GWWSWLYASD (234 aa)) is the PABS domain. Gln34 contacts S-methyl-5'-thioadenosine. Spermidine contacts are provided by His65 and Asp89. S-methyl-5'-thioadenosine contacts are provided by residues Glu109 and 140–141 (DG). Asp159 functions as the Proton acceptor in the catalytic mechanism. 159–162 (DGSD) contributes to the spermidine binding site. Pro166 contacts S-methyl-5'-thioadenosine.

Belongs to the spermidine/spermine synthase family. Homodimer or homotetramer. Homodimer.

It localises to the cytoplasm. It carries out the reaction S-adenosyl 3-(methylsulfanyl)propylamine + putrescine = S-methyl-5'-thioadenosine + spermidine + H(+). It functions in the pathway amine and polyamine biosynthesis; spermidine biosynthesis; spermidine from putrescine: step 1/1. In terms of biological role, catalyzes the irreversible transfer of a propylamine group from the amino donor S-adenosylmethioninamine (decarboxy-AdoMet) to putrescine (1,4-diaminobutane) to yield spermidine. In Synechococcus elongatus (strain ATCC 33912 / PCC 7942 / FACHB-805) (Anacystis nidulans R2), this protein is Polyamine aminopropyltransferase.